A 428-amino-acid chain; its full sequence is Serine--tRNA ligase (428 aa).

L-serine is bound at residue 235–237; that stretch reads TAE. Position 266 to 268 (266 to 268) interacts with ATP; that stretch reads RSE. Position 289 (E289) interacts with L-serine. Residue 353-356 participates in ATP binding; it reads EISS. S389 contributes to the L-serine binding site.

It belongs to the class-II aminoacyl-tRNA synthetase family. Type-1 seryl-tRNA synthetase subfamily. Homodimer. The tRNA molecule binds across the dimer.

It is found in the cytoplasm. It catalyses the reaction tRNA(Ser) + L-serine + ATP = L-seryl-tRNA(Ser) + AMP + diphosphate + H(+). It carries out the reaction tRNA(Sec) + L-serine + ATP = L-seryl-tRNA(Sec) + AMP + diphosphate + H(+). The protein operates within aminoacyl-tRNA biosynthesis; selenocysteinyl-tRNA(Sec) biosynthesis; L-seryl-tRNA(Sec) from L-serine and tRNA(Sec): step 1/1. Functionally, catalyzes the attachment of serine to tRNA(Ser). Is also able to aminoacylate tRNA(Sec) with serine, to form the misacylated tRNA L-seryl-tRNA(Sec), which will be further converted into selenocysteinyl-tRNA(Sec). The polypeptide is Serine--tRNA ligase (Shewanella baltica (strain OS223)).